The chain runs to 154 residues: MGSKCCKGGPDEDAVERQRRQKLLLAQLHHRKRVKAAGQIQAWWRGVLVRRTLLVAALRAWMIQCWWRTLVQRRIRQRRQALLRVYVIQEQATVKLQSCIRMWQCRQCYRQMCNALCLFQVPESSLAFQTDGFLQVQYAIPSKQPEFHIEILSI.

In terms of domain architecture, IQ spans 89-118 (QEQATVKLQSCIRMWQCRQCYRQMCNALCL).

This Homo sapiens (Human) protein is IQ domain-containing protein F3 (IQCF3).